A 350-amino-acid polypeptide reads, in one-letter code: Small ribosomal subunit biogenesis GTPase RsgA (350 aa).

A compositionally biased stretch (polar residues) spans 1–17 (MSKNKLSKGQQRRVNAN). A disordered region spans residues 1-33 (MSKNKLSKGQQRRVNANHQRRLKTSKEKPDYDD). Positions 104 to 273 (TSVLTRPDFY…VIDSPGVREF (170 aa)) constitute a CP-type G domain. GTP is bound by residues 160 to 163 (NKID) and 214 to 222 (GQSGVGKSS). Residues Cys-297, Cys-302, His-304, and Cys-310 each contribute to the Zn(2+) site.

It belongs to the TRAFAC class YlqF/YawG GTPase family. RsgA subfamily. Monomer. Associates with 30S ribosomal subunit, binds 16S rRNA. The cofactor is Zn(2+).

The protein localises to the cytoplasm. Its function is as follows. One of several proteins that assist in the late maturation steps of the functional core of the 30S ribosomal subunit. Helps release RbfA from mature subunits. May play a role in the assembly of ribosomal proteins into the subunit. Circularly permuted GTPase that catalyzes slow GTP hydrolysis, GTPase activity is stimulated by the 30S ribosomal subunit. This is Small ribosomal subunit biogenesis GTPase RsgA from Shigella flexneri.